A 157-amino-acid chain; its full sequence is Probable chemoreceptor glutamine deamidase CheD (157 aa).

The protein belongs to the CheD family.

The enzyme catalyses L-glutaminyl-[protein] + H2O = L-glutamyl-[protein] + NH4(+). Probably deamidates glutamine residues to glutamate on methyl-accepting chemotaxis receptors (MCPs), playing an important role in chemotaxis. This Archaeoglobus fulgidus (strain ATCC 49558 / DSM 4304 / JCM 9628 / NBRC 100126 / VC-16) protein is Probable chemoreceptor glutamine deamidase CheD.